Here is a 427-residue protein sequence, read N- to C-terminus: UDP-N-acetylglucosamine 1-carboxyvinyltransferase (427 aa).

A phosphoenolpyruvate-binding site is contributed by 22 to 23; the sequence is KN. Arg-92 serves as a coordination point for UDP-N-acetyl-alpha-D-glucosamine. The active-site Proton donor is the Asp-116. The UDP-N-acetyl-alpha-D-glucosamine site is built by Asp-312 and Met-334.

The protein belongs to the EPSP synthase family. MurA subfamily.

It localises to the cytoplasm. It carries out the reaction phosphoenolpyruvate + UDP-N-acetyl-alpha-D-glucosamine = UDP-N-acetyl-3-O-(1-carboxyvinyl)-alpha-D-glucosamine + phosphate. It functions in the pathway cell wall biogenesis; peptidoglycan biosynthesis. Cell wall formation. Adds enolpyruvyl to UDP-N-acetylglucosamine. This chain is UDP-N-acetylglucosamine 1-carboxyvinyltransferase, found in Borreliella burgdorferi (strain ATCC 35210 / DSM 4680 / CIP 102532 / B31) (Borrelia burgdorferi).